We begin with the raw amino-acid sequence, 272 residues long: METYAVFGNPIAHSKSPFIHQQFAQQLNIEHPYGRVLAPINDFINTLNAFFRAGGKGANVTVPFKEEAFARADELTERAALAGAVNTLMRLEDGRLLGDNTDGVGLLSDLERLSFIRPGLRILLIGAGGASRGVLLPLLSLDCAVTITNRTVSRAEELAKLFEHTGSIQALGMDELEGHEFDLIINATSSGISGDIPAIPSSLIHPGIYCYDMFYQKGKTPFLAWCEQRGSKRNADGLGMLVAQAAHAFLLWHGVLPDVEPVIKLLQQELSA.

Shikimate-binding positions include 14 to 16 and T61; that span reads SKS. K65 serves as the catalytic Proton acceptor. E77 is a binding site for NADP(+). Positions 86 and 102 each coordinate shikimate. Residues 126–130, 149–154, and M213 each bind NADP(+); these read GAGGA and NRTVSR. Y215 contacts shikimate. NADP(+) is bound at residue G237.

The protein belongs to the shikimate dehydrogenase family. As to quaternary structure, homodimer.

The enzyme catalyses shikimate + NADP(+) = 3-dehydroshikimate + NADPH + H(+). Its pathway is metabolic intermediate biosynthesis; chorismate biosynthesis; chorismate from D-erythrose 4-phosphate and phosphoenolpyruvate: step 4/7. Functionally, involved in the biosynthesis of the chorismate, which leads to the biosynthesis of aromatic amino acids. Catalyzes the reversible NADPH linked reduction of 3-dehydroshikimate (DHSA) to yield shikimate (SA). The chain is Shikimate dehydrogenase (NADP(+)) from Shigella dysenteriae serotype 1 (strain Sd197).